Consider the following 33-residue polypeptide: ISLAQIKKLLQIIKQGLKAICDNRDLIAKGCQA.

Belongs to the myrmexin family. As to quaternary structure, heterodimer composed of subunit LS2 and subunit SS1, heterodimer composed of subunit LS2 and SS2, and heterodimer composed of subunit LS2 and SS3; disulfide-linked. As to expression, expressed by the venom gland.

It is found in the secreted. Functionally, this heterodimer may have anti-inflammatory properties, since the myrmexin complex (composed of 6 SS-LS heterodimers) inhibits carrageenin-induced edema in a dose-dependent manner (after subcutaneous injection into rats). This is U1-pseudomyrmecitoxin-Pt1 subunit LS2 from Pseudomyrmex triplarinus (Ant).